A 301-amino-acid polypeptide reads, in one-letter code: tRNA-cytidine(32) 2-sulfurtransferase (301 aa).

The PP-loop motif motif lies at 47 to 52 (SGGKDS). [4Fe-4S] cluster is bound by residues cysteine 122, cysteine 125, and cysteine 213.

The protein belongs to the TtcA family. In terms of assembly, homodimer. Requires Mg(2+) as cofactor. The cofactor is [4Fe-4S] cluster.

Its subcellular location is the cytoplasm. The enzyme catalyses cytidine(32) in tRNA + S-sulfanyl-L-cysteinyl-[cysteine desulfurase] + AH2 + ATP = 2-thiocytidine(32) in tRNA + L-cysteinyl-[cysteine desulfurase] + A + AMP + diphosphate + H(+). Its pathway is tRNA modification. Its function is as follows. Catalyzes the ATP-dependent 2-thiolation of cytidine in position 32 of tRNA, to form 2-thiocytidine (s(2)C32). The sulfur atoms are provided by the cysteine/cysteine desulfurase (IscS) system. The protein is tRNA-cytidine(32) 2-sulfurtransferase of Photobacterium profundum (strain SS9).